Consider the following 138-residue polypeptide: MALLPDKEKLLRNFLRCANWEEKYLYIIELGQRLTELRDEDRSPQNSIQGCQSQVWIVMRQNAHGIIELQGDSDAAIVKGLIAVVFILYDQMTPQDIVSFDVRPWFEKMALTQHLTPSRSQGLEAMIRAIRAKAAALS.

Cys51 (cysteine persulfide intermediate) is an active-site residue.

Belongs to the SufE family. In terms of assembly, homodimer. Interacts with SufS.

It localises to the cytoplasm. The protein operates within cofactor biosynthesis; iron-sulfur cluster biosynthesis. Functionally, participates in cysteine desulfuration mediated by SufS. Cysteine desulfuration mobilizes sulfur from L-cysteine to yield L-alanine and constitutes an essential step in sulfur metabolism for biosynthesis of a variety of sulfur-containing biomolecules. Functions as a sulfur acceptor for SufS, by mediating the direct transfer of the sulfur atom from the S-sulfanylcysteine of SufS, an intermediate product of cysteine desulfuration process. In Shigella sonnei (strain Ss046), this protein is Cysteine desulfuration protein SufE.